A 343-amino-acid polypeptide reads, in one-letter code: N-acetyl-gamma-glutamyl-phosphate reductase (343 aa).

The active site involves cysteine 147.

The protein belongs to the NAGSA dehydrogenase family. Type 1 subfamily.

It is found in the cytoplasm. The enzyme catalyses N-acetyl-L-glutamate 5-semialdehyde + phosphate + NADP(+) = N-acetyl-L-glutamyl 5-phosphate + NADPH + H(+). It functions in the pathway amino-acid biosynthesis; L-arginine biosynthesis; N(2)-acetyl-L-ornithine from L-glutamate: step 3/4. Catalyzes the NADPH-dependent reduction of N-acetyl-5-glutamyl phosphate to yield N-acetyl-L-glutamate 5-semialdehyde. This chain is N-acetyl-gamma-glutamyl-phosphate reductase, found in Staphylococcus aureus (strain USA300).